Consider the following 258-residue polypeptide: Undecaprenyl-diphosphatase (258 aa).

8 helical membrane passes run 1–21, 42–62, 69–89, 96–116, 135–155, 173–193, 211–231, and 237–257; these read MDFLNAVILGIVEGLTEFLPV, LKCFEVVIQLGSILAVVFMFF, FNLWIKLAIGFVPTAIIGFLA, FFEPSTVAYMLIIGGIVFIVV, VSFKQAFIIGLSQCFAMIPGT, EVAARFSFLLAIPTMFAATAY, IFLVGGFMAFIVALIVIKLFL, and FSYISFGIYRIILGSIFLIYI.

This sequence belongs to the UppP family.

Its subcellular location is the cell inner membrane. It catalyses the reaction di-trans,octa-cis-undecaprenyl diphosphate + H2O = di-trans,octa-cis-undecaprenyl phosphate + phosphate + H(+). Catalyzes the dephosphorylation of undecaprenyl diphosphate (UPP). Confers resistance to bacitracin. The sequence is that of Undecaprenyl-diphosphatase from Campylobacter fetus subsp. fetus (strain 82-40).